A 356-amino-acid chain; its full sequence is Holliday junction branch migration complex subunit RuvB (356 aa).

A large ATPase domain (RuvB-L) region spans residues 4 to 191; sequence TDKLATEQRI…FGIVARLEFY (188 aa). Residues L30, R31, G72, K75, T76, T77, 138–140, R181, Y191, and R228 each bind ATP; that span reads EDY. T76 is a binding site for Mg(2+). The segment at 192–262 is small ATPAse domain (RuvB-S); the sequence is DAEQLSRIVR…VADAALAMLD (71 aa). The interval 265–356 is head domain (RuvB-H); it reads PVGFDLMDRK…RDEWDTPDGK (92 aa). The DNA site is built by R301, R320, and R325.

Belongs to the RuvB family. Homohexamer. Forms an RuvA(8)-RuvB(12)-Holliday junction (HJ) complex. HJ DNA is sandwiched between 2 RuvA tetramers; dsDNA enters through RuvA and exits via RuvB. An RuvB hexamer assembles on each DNA strand where it exits the tetramer. Each RuvB hexamer is contacted by two RuvA subunits (via domain III) on 2 adjacent RuvB subunits; this complex drives branch migration. In the full resolvosome a probable DNA-RuvA(4)-RuvB(12)-RuvC(2) complex forms which resolves the HJ.

The protein resides in the cytoplasm. It catalyses the reaction ATP + H2O = ADP + phosphate + H(+). Functionally, the RuvA-RuvB-RuvC complex processes Holliday junction (HJ) DNA during genetic recombination and DNA repair, while the RuvA-RuvB complex plays an important role in the rescue of blocked DNA replication forks via replication fork reversal (RFR). RuvA specifically binds to HJ cruciform DNA, conferring on it an open structure. The RuvB hexamer acts as an ATP-dependent pump, pulling dsDNA into and through the RuvAB complex. RuvB forms 2 homohexamers on either side of HJ DNA bound by 1 or 2 RuvA tetramers; 4 subunits per hexamer contact DNA at a time. Coordinated motions by a converter formed by DNA-disengaged RuvB subunits stimulates ATP hydrolysis and nucleotide exchange. Immobilization of the converter enables RuvB to convert the ATP-contained energy into a lever motion, pulling 2 nucleotides of DNA out of the RuvA tetramer per ATP hydrolyzed, thus driving DNA branch migration. The RuvB motors rotate together with the DNA substrate, which together with the progressing nucleotide cycle form the mechanistic basis for DNA recombination by continuous HJ branch migration. Branch migration allows RuvC to scan DNA until it finds its consensus sequence, where it cleaves and resolves cruciform DNA. This is Holliday junction branch migration complex subunit RuvB from Burkholderia cenocepacia (strain HI2424).